The primary structure comprises 385 residues: Elsinochromes biosynthesis cluster protein HP2 (385 aa).

Positions 1-22 (MVLLYILIMVALIPMYMTVVQD) are cleaved as a signal peptide. Transmembrane regions (helical) follow at residues 94–114 (TVLS…SMFD) and 148–168 (FYGQ…IVLW). The N-linked (GlcNAc...) asparagine glycan is linked to Asn187. A helical transmembrane segment spans residues 209–229 (SWTFGQIVPIVLLVSPLVAAF). Asn248 carries N-linked (GlcNAc...) asparagine glycosylation. The next 2 helical transmembrane spans lie at 309-329 (AILF…LPLA) and 344-364 (YYAF…AVPF).

It is found in the membrane. Its function is as follows. Part of the gene cluster that mediates the biosynthesis of elsinochromes, pigments consisting of at least four interconvertible tautomers (A, B, C and D) that have a core phenolic quinone to which various side chains are attached and which play an important role in fungal pathogenesis. The non-reducing polyketide synthase PKS1 was proposed to iteratively catalyze decarboxylation between acetyl-CoA and malonyl-CoA subunits for polyketide chain elongation. The released polyketide undergoes cyclization to form an aromatic ring, and proceeds via serial modification steps to produce the heptaketide back- bone of elsinochrome. As elsinochrome has a symmetrical structure, two identical heptaketides are fused to form a core 1,2-dihydrobenzo-perylene ring structure, which can then be successively modified to produce the various derivatives of elsinochrome. Some of these reactions may be cooperatively carried out, at least in part, by the products of RDT1, OXR1 and PKS1. PRF1, embedded within the elsinochrome cluster possibly functions to stabilize some of the biosynthetic enzymes required for elsinochrome production. As prefoldin is a hexamer containing 2 a and 4 b subunits, additional prefoldin subunits, whose coding genes may not immediately link to the elsinochrome biosynthetic gene cluster, are required to fulfill the chaperone function. In addition, no methyltransferase-coding gene exists within the biosynthetic gene cluster, even though elsinochrome has four methyl groups at positions C3, C7, C8 and C12. Apparently, the identified gene cluster does not contain the entire entourage of genes responsible for elsinochrome biosynthesis. Once elsinochrome is synthesized, it must be exported outside the fungal cells, which is probably accomplished by the ECT1 transporter, to avoid toxicity. This chain is Elsinochromes biosynthesis cluster protein HP2, found in Elsinoe fawcettii (Citrus scab fungus).